A 274-amino-acid polypeptide reads, in one-letter code: NAD-dependent protein deacetylase (274 aa).

The 274-residue stretch at 1–274 folds into the Deacetylase sirtuin-type domain; sequence MDSRMSDLQA…CDEVLAEVVS (274 aa). NAD(+) is bound by residues 26–46 and 104–107; these read GAGCSTASGIPDYRDGQGQWK and QNVD. Residue His122 is the Proton acceptor of the active site. Zn(2+) contacts are provided by Cys130, Cys133, Cys181, and Cys184. NAD(+) contacts are provided by residues 221–223, 247–249, and Cys265; these read GSS and NLG.

This sequence belongs to the sirtuin family. Class II subfamily. Zn(2+) is required as a cofactor.

It localises to the cytoplasm. It carries out the reaction N(6)-acetyl-L-lysyl-[protein] + NAD(+) + H2O = 2''-O-acetyl-ADP-D-ribose + nicotinamide + L-lysyl-[protein]. In terms of biological role, NAD-dependent protein deacetylase which modulates the activities of several enzymes which are inactive in their acetylated form. This chain is NAD-dependent protein deacetylase, found in Bordetella bronchiseptica (strain ATCC BAA-588 / NCTC 13252 / RB50) (Alcaligenes bronchisepticus).